The following is a 116-amino-acid chain: NADPH-dependent 7-cyano-7-deazaguanine reductase (116 aa).

The active-site Thioimide intermediate is the C31. D38 serves as the catalytic Proton donor. Residues 53 to 55 (IEL) and 72 to 73 (YE) each bind substrate.

It belongs to the GTP cyclohydrolase I family. QueF type 1 subfamily.

The protein resides in the cytoplasm. The enzyme catalyses 7-aminomethyl-7-carbaguanine + 2 NADP(+) = 7-cyano-7-deazaguanine + 2 NADPH + 3 H(+). It participates in tRNA modification; tRNA-queuosine biosynthesis. Its function is as follows. Catalyzes the NADPH-dependent reduction of 7-cyano-7-deazaguanine (preQ0) to 7-aminomethyl-7-deazaguanine (preQ1). In Pelodictyon phaeoclathratiforme (strain DSM 5477 / BU-1), this protein is NADPH-dependent 7-cyano-7-deazaguanine reductase.